The primary structure comprises 59 residues: Arabinogalactan protein 13 (59 aa).

An N-terminal signal peptide occupies residues 1-27 (MEAMKMRLFVAVLVAAMAFSAVQQAAA). Residues proline 31, proline 33, and proline 35 each carry the 4-hydroxyproline modification. O-linked (Ara...) hydroxyproline glycosylation is found at proline 31, proline 33, and proline 35. Serine 37 carries the GPI-anchor amidated serine lipid modification. A propeptide spans 38–59 (DASLAIPAFFASVATLAFGFLF) (removed in mature form).

The protein belongs to the AG-peptide AGP family. In terms of processing, contains 4-hydroxyproline; hydroxylated on Pro-31, Pro-33 and Pro-35. Post-translationally, O-glycosylated on hydroxyprolines; noncontiguous hydroxylproline residues are glycosylated with arabinogalactan.

It is found in the cell membrane. Its function is as follows. Proteoglycan that seems to be implicated in diverse developmental roles such as differentiation, cell-cell recognition, embryogenesis and programmed cell death. This Arabidopsis thaliana (Mouse-ear cress) protein is Arabinogalactan protein 13.